A 285-amino-acid polypeptide reads, in one-letter code: Polyamine aminopropyltransferase (285 aa).

Positions 5–241 (DNWYIEHFQP…GWWSVTMASK (237 aa)) constitute a PABS domain. An S-methyl-5'-thioadenosine-binding site is contributed by Gln35. Spermidine-binding residues include His66 and Asp90. S-methyl-5'-thioadenosine-binding positions include Asp110 and 141–142 (DG). The Proton acceptor role is filled by Asp160. 160 to 163 (DSTD) lines the spermidine pocket. S-methyl-5'-thioadenosine is bound at residue Pro167.

The protein belongs to the spermidine/spermine synthase family. As to quaternary structure, homodimer or homotetramer.

It is found in the cytoplasm. It carries out the reaction S-adenosyl 3-(methylsulfanyl)propylamine + putrescine = S-methyl-5'-thioadenosine + spermidine + H(+). Its pathway is amine and polyamine biosynthesis; spermidine biosynthesis; spermidine from putrescine: step 1/1. Its function is as follows. Catalyzes the irreversible transfer of a propylamine group from the amino donor S-adenosylmethioninamine (decarboxy-AdoMet) to putrescine (1,4-diaminobutane) to yield spermidine. This chain is Polyamine aminopropyltransferase, found in Xanthomonas euvesicatoria pv. vesicatoria (strain 85-10) (Xanthomonas campestris pv. vesicatoria).